Here is a 151-residue protein sequence, read N- to C-terminus: D-aminoacyl-tRNA deacylase (151 aa).

The short motif at 139-140 is the Gly-cisPro motif, important for rejection of L-amino acids element; it reads GP.

Belongs to the DTD family. Homodimer.

It is found in the cytoplasm. It catalyses the reaction glycyl-tRNA(Ala) + H2O = tRNA(Ala) + glycine + H(+). It carries out the reaction a D-aminoacyl-tRNA + H2O = a tRNA + a D-alpha-amino acid + H(+). Functionally, an aminoacyl-tRNA editing enzyme that deacylates mischarged D-aminoacyl-tRNAs. Also deacylates mischarged glycyl-tRNA(Ala), protecting cells against glycine mischarging by AlaRS. Acts via tRNA-based rather than protein-based catalysis; rejects L-amino acids rather than detecting D-amino acids in the active site. By recycling D-aminoacyl-tRNA to D-amino acids and free tRNA molecules, this enzyme counteracts the toxicity associated with the formation of D-aminoacyl-tRNA entities in vivo and helps enforce protein L-homochirality. The sequence is that of D-aminoacyl-tRNA deacylase from Symbiobacterium thermophilum (strain DSM 24528 / JCM 14929 / IAM 14863 / T).